We begin with the raw amino-acid sequence, 154 residues long: Fimbrial protein (154 aa).

Residues 1 to 6 (MKAQKG) constitute a propeptide, leader sequence. F7 is modified (N-methylphenylalanine). Residues 7 to 27 (FTLIELMIVVAIIGILAAIAI) traverse the membrane as a helical segment. An intrachain disulfide couples C133 to C151.

The protein belongs to the N-Me-Phe pilin family. In terms of assembly, the pili are polar flexible filaments of about 5.4 nanometers diameter and 2.5 micrometers average length; they consist of only a single polypeptide chain arranged in a helical configuration of five subunits per turn in the assembled pilus.

It localises to the fimbrium. The protein localises to the membrane. This Pseudomonas aeruginosa protein is Fimbrial protein (pilA).